The chain runs to 38 residues: Cytochrome b6-f complex subunit 5 (38 aa).

The chain crosses the membrane as a helical span at residues 5–25 (LLLGIVLGLIPVTLAGLFVAA).

This sequence belongs to the PetG family. In terms of assembly, the 4 large subunits of the cytochrome b6-f complex are cytochrome b6, subunit IV (17 kDa polypeptide, PetD), cytochrome f and the Rieske protein, while the 4 small subunits are PetG, PetL, PetM and PetN. The complex functions as a dimer.

The protein localises to the cellular thylakoid membrane. Functionally, component of the cytochrome b6-f complex, which mediates electron transfer between photosystem II (PSII) and photosystem I (PSI), cyclic electron flow around PSI, and state transitions. PetG is required for either the stability or assembly of the cytochrome b6-f complex. This chain is Cytochrome b6-f complex subunit 5, found in Synechocystis sp. (strain ATCC 27184 / PCC 6803 / Kazusa).